The primary structure comprises 216 residues: Pyrophosphatase PpaX (216 aa).

Asp9 functions as the Nucleophile in the catalytic mechanism.

The protein belongs to the HAD-like hydrolase superfamily. PpaX family. Requires Mg(2+) as cofactor.

The enzyme catalyses diphosphate + H2O = 2 phosphate + H(+). Its function is as follows. Hydrolyzes pyrophosphate formed during P-Ser-HPr dephosphorylation by HPrK/P. Might play a role in controlling the intracellular pyrophosphate pool. This chain is Pyrophosphatase PpaX, found in Bacillus anthracis (strain A0248).